A 122-amino-acid polypeptide reads, in one-letter code: Large ribosomal subunit protein uL14c (122 aa).

Belongs to the universal ribosomal protein uL14 family. As to quaternary structure, part of the 50S ribosomal subunit.

Its subcellular location is the plastid. It localises to the chloroplast. Its function is as follows. Binds to 23S rRNA. The protein is Large ribosomal subunit protein uL14c of Chaetosphaeridium globosum (Charophycean green alga).